The primary structure comprises 934 residues: Oxysterol-binding protein-related protein 6 (934 aa).

A disordered region spans residues M1–P62. Residue S2 is modified to N-acetylserine. The span at T14–Q29 shows a compositional bias: low complexity. The span at R30–E40 shows a compositional bias: basic and acidic residues. S35 carries the post-translational modification Phosphoserine. Over residues T42 to R53 the composition is skewed to polar residues. A PH domain is found at P86–L181. Phosphoserine occurs at positions 190 and 290.

This sequence belongs to the OSBP family. In terms of assembly, homodimer. Interacts with OSBPL3. Expressed in brain and striated muscle (at protein level). Widely expressed. Expressed in skeletal muscle.

The protein resides in the cytoplasm. It localises to the cytosol. The protein localises to the endoplasmic reticulum membrane. It is found in the nucleus envelope. Its subcellular location is the cell membrane. The protein resides in the endosome membrane. In terms of biological role, regulates cellular transport and efflux of cholesterol. Plays a role in phosphatidylinositol-4-phophate (PI4P) turnover at the neuronal membrane. Binds via its PH domain PI4P, phosphatidylinositol-4,5-diphosphate, phosphatidylinositol-3,4,5-triphosphate, and phosphatidic acid. Weakly binds 25-hydroxycholesterol. This is Oxysterol-binding protein-related protein 6 (OSBPL6) from Homo sapiens (Human).